The following is a 659-amino-acid chain: Zinc finger protein 304 (659 aa).

Residues 14-88 (VTFEDVFVYF…TAESGLFQKA (75 aa)) enclose the KRAB domain. 16 consecutive C2H2-type zinc fingers follow at residues 89 to 111 (HPCE…QGSH), 115 to 139 (KLCT…QKQH), 251 to 273 (FRCL…RKIH), 279 to 301 (HVCK…QKFH), 307 to 329 (YTCS…QRVH), 335 to 357 (YDCS…QRIH), 363 to 385 (YKCN…QRFH), 391 to 413 (YECS…WRIH), 419 to 441 (YECI…RRVH), 447 to 469 (YVCS…QIIH), 475 to 497 (YECS…QKIH), 503 to 525 (YECG…QRIH), 531 to 553 (YECN…QRVH), 559 to 581 (YVCS…KKVH), 587 to 609 (YECS…QRVH), and 615 to 637 (YVCS…QKAH).

It belongs to the krueppel C2H2-type zinc-finger protein family. Probably part of a corepressor complex containing ZNF304, TRIM28, SETDB1 and DNMT1; leading to promoter hypermethylation and transcriptional silencing. Probably associates with Polycomb group (PcG) complexes; leading to trimethylation of 'Lys-27' of histone H3 (H3K27me3). Interacts with USP28. Deubiquitinated by USP28; the deubiquitination leads to the stabilization of ZNF304 from proteolytic degradation. Expressed in undifferentiated embryonic stem cells (ESCs). Expressed strongly in colorectal cancers cells (CRCs). Expressed strongly in ovarian carcinoma (OC) tumor cell lines compared to non-transformed ovarian epithelial cells (at protein level). Expressed in lymphoid tissues, thyroid, adrenal gland, prostate, pancreas and skeletal muscles.

The protein resides in the nucleus. Its function is as follows. Acts as a transcriptional regulator and plays a role in gene silencing. Probably forms a corepressor complex required for activated KRAS-mediated promoter hypermethylation and transcriptional silencing of several tumor suppressor genes (TSGs) or other tumor-related genes in colorectal cancer (CRC) cells. Also required to maintain a transcriptionally repressive state of genes in undifferentiated embryonic stem cells (ESCs) by inducing trimethylation of 'Lys-27' of histone H3 (H3K27me3) in a Polycomb group (PcG) complexes-dependent manner. Associates at promoter regions of TSGs and mediates the recruitment of the corepressor complex containing the scaffolding protein TRIM28, methyltransferase DNMT1 and histone methyltransferase SETDB1 and/or the PcG complexes at those sites. Transcription factor involved in the metastatic cascade process by inducing cell migration and proliferation and gain resistance to anoikis of ovarian carcinoma (OC) cells via integrin-mediated signaling pathways. Associates with the ITGB1 promoter and positively regulates beta-1 integrin transcription expression. Promotes angiogenesis. Promotes tumor growth. This Homo sapiens (Human) protein is Zinc finger protein 304.